The chain runs to 72 residues: DNA-directed RNA polymerase subunit epsilon (72 aa).

The protein belongs to the RNA polymerase subunit epsilon family. As to quaternary structure, RNAP is composed of a core of 2 alpha, a beta and a beta' subunit. The core is associated with a delta subunit, and at least one of epsilon or omega. When a sigma factor is associated with the core the holoenzyme is formed, which can initiate transcription.

The enzyme catalyses RNA(n) + a ribonucleoside 5'-triphosphate = RNA(n+1) + diphosphate. A non-essential component of RNA polymerase (RNAP). This Lactiplantibacillus plantarum (strain ATCC BAA-793 / NCIMB 8826 / WCFS1) (Lactobacillus plantarum) protein is DNA-directed RNA polymerase subunit epsilon.